Reading from the N-terminus, the 510-residue chain is Nectin-4 (510 aa).

A signal peptide spans 1–31; the sequence is MPLSLGAEMWGPAAWLLLLLLLASFTGQRLA. One can recognise an Ig-like V-type domain in the interval 32 to 144; that stretch reads GELETSDLVT…GSFQARLRLR (113 aa). Residues 32 to 349 are Extracellular-facing; it reads GELETSDLVT…GKQVDLVSAS (318 aa). Disulfide bonds link Cys52–Cys127, Cys171–Cys223, and Cys270–Cys315. Ig-like C2-type domains follow at residues 148–237 and 248–331; these read PPLP…QRIT and ASVR…VVVD. Asn281 carries an N-linked (GlcNAc...) asparagine glycan. A helical membrane pass occupies residues 350–370; sequence VVVVGVIAALLFCLLVVVVVL. Over 371–510 the chain is Cytoplasmic; sequence MSRYHRRKAQ…IYINGRGHLV (140 aa). Over residues 400-412 the composition is skewed to basic and acidic residues; it reads RLHSHHSDPRNQP. The tract at residues 400-475 is disordered; the sequence is RLHSHHSDPR…GRAEEEEDRD (76 aa).

This sequence belongs to the nectin family. Self-associates. Interacts via its Ig-like V-type domain with NECTIN1 Ig-like V-type domain. Interacts via its C-terminus with AFDN. Interacts with TIGIT.

Its subcellular location is the cell membrane. The protein resides in the cell junction. It is found in the adherens junction. Its function is as follows. Seems to be involved in cell adhesion through trans-homophilic and -heterophilic interactions, the latter including specifically interactions with NECTIN1. Plays a role in the senescence-associated cell size enlargement via SFK/PI3K/Rac1 and thus promotes senescent cell survival. Also participates in the innate immune response by acting as a ligand for the receptor TIGIT to inhibit NK-cell activity. The sequence is that of Nectin-4 from Bos taurus (Bovine).